Reading from the N-terminus, the 360-residue chain is Peptide chain release factor 1 (360 aa).

Residue glutamine 235 is modified to N5-methylglutamine. The interval 284 to 313 (AKRQQAEASTRRNLLGSGDRSDRNRTYNFP) is disordered.

This sequence belongs to the prokaryotic/mitochondrial release factor family. In terms of processing, methylated by PrmC. Methylation increases the termination efficiency of RF1.

The protein resides in the cytoplasm. In terms of biological role, peptide chain release factor 1 directs the termination of translation in response to the peptide chain termination codons UAG and UAA. The chain is Peptide chain release factor 1 from Salmonella arizonae (strain ATCC BAA-731 / CDC346-86 / RSK2980).